The following is a 557-amino-acid chain: Formate--tetrahydrofolate ligase (557 aa).

Position 66-73 (66-73 (TPAGEGKS)) interacts with ATP.

It belongs to the formate--tetrahydrofolate ligase family.

The catalysed reaction is (6S)-5,6,7,8-tetrahydrofolate + formate + ATP = (6R)-10-formyltetrahydrofolate + ADP + phosphate. It functions in the pathway one-carbon metabolism; tetrahydrofolate interconversion. The sequence is that of Formate--tetrahydrofolate ligase from Clostridium botulinum (strain Kyoto / Type A2).